A 354-amino-acid chain; its full sequence is Uroporphyrinogen decarboxylase (354 aa).

Residues Arg25–Arg29, Phe44, Asp75, Tyr152, Thr207, and His330 contribute to the substrate site.

Belongs to the uroporphyrinogen decarboxylase family. In terms of assembly, homodimer.

The protein localises to the cytoplasm. It carries out the reaction uroporphyrinogen III + 4 H(+) = coproporphyrinogen III + 4 CO2. The protein operates within porphyrin-containing compound metabolism; protoporphyrin-IX biosynthesis; coproporphyrinogen-III from 5-aminolevulinate: step 4/4. In terms of biological role, catalyzes the decarboxylation of four acetate groups of uroporphyrinogen-III to yield coproporphyrinogen-III. The sequence is that of Uroporphyrinogen decarboxylase from Xylella fastidiosa (strain Temecula1 / ATCC 700964).